Here is a 418-residue protein sequence, read N- to C-terminus: Putative ion-transport protein YfeO (418 aa).

The next 12 helical transmembrane spans lie at 10–30, 54–74, 99–119, 120–140, 149–169, 186–206, 223–243, 258–278, 300–320, 322–342, 343–363, and 371–391; these read LLLSLPAVAIGIASSLILIVV, DSPFWIIAILTLTGIAVGLVI, ALPGLIVALILGLAGGVSLGP, EHPIMTVNIALAVAIGARLLP, ILASAGTIGALFGTPVAAALI, LFAPLMAAAAGALTTGLFFHP, ILSGAIVAAIAIAAGMVAVWC, VLMLGVGGFILGILGVIAGPV, DYFLLAVIKLAALVVAAASGF, GGRIFPAVFVGVALGLMLHEH, VPAVPAAITVSCAILGIVLVV, and LFMAAVVVPNTTLLPLLCIVM.

This sequence belongs to the chloride channel (TC 2.A.49) family.

The protein resides in the cell membrane. The polypeptide is Putative ion-transport protein YfeO (Escherichia coli (strain SMS-3-5 / SECEC)).